The sequence spans 309 residues: UDP-N-acetylenolpyruvoylglucosamine reductase (309 aa).

Positions 34–221 constitute an FAD-binding PCMH-type domain; sequence RVGGPAQVLF…TAAREAAQPI (188 aa). The active site involves Arg179. The active-site Proton donor is Ser228. Glu298 is an active-site residue.

This sequence belongs to the MurB family. FAD serves as cofactor.

The protein localises to the cytoplasm. The catalysed reaction is UDP-N-acetyl-alpha-D-muramate + NADP(+) = UDP-N-acetyl-3-O-(1-carboxyvinyl)-alpha-D-glucosamine + NADPH + H(+). It functions in the pathway cell wall biogenesis; peptidoglycan biosynthesis. Cell wall formation. This is UDP-N-acetylenolpyruvoylglucosamine reductase from Methylorubrum populi (strain ATCC BAA-705 / NCIMB 13946 / BJ001) (Methylobacterium populi).